We begin with the raw amino-acid sequence, 284 residues long: Bifunctional protein FolD 1 (284 aa).

NADP(+) contacts are provided by residues 166–168 (GAS) and I232.

The protein belongs to the tetrahydrofolate dehydrogenase/cyclohydrolase family. As to quaternary structure, homodimer.

It catalyses the reaction (6R)-5,10-methylene-5,6,7,8-tetrahydrofolate + NADP(+) = (6R)-5,10-methenyltetrahydrofolate + NADPH. It carries out the reaction (6R)-5,10-methenyltetrahydrofolate + H2O = (6R)-10-formyltetrahydrofolate + H(+). Its pathway is one-carbon metabolism; tetrahydrofolate interconversion. Its function is as follows. Catalyzes the oxidation of 5,10-methylenetetrahydrofolate to 5,10-methenyltetrahydrofolate and then the hydrolysis of 5,10-methenyltetrahydrofolate to 10-formyltetrahydrofolate. The protein is Bifunctional protein FolD 1 of Ectopseudomonas mendocina (strain ymp) (Pseudomonas mendocina).